Reading from the N-terminus, the 130-residue chain is S-adenosylmethionine decarboxylase proenzyme (130 aa).

The active-site Schiff-base intermediate with substrate; via pyruvic acid is the S63. Residue S63 is modified to Pyruvic acid (Ser); by autocatalysis. The active-site Proton acceptor; for processing activity is the H68. The Proton donor; for catalytic activity role is filled by C83.

Belongs to the prokaryotic AdoMetDC family. Type 1 subfamily. Heterotetramer of two alpha and two beta chains arranged as a dimer of alpha/beta heterodimers. It depends on pyruvate as a cofactor. Post-translationally, is synthesized initially as an inactive proenzyme. Formation of the active enzyme involves a self-maturation process in which the active site pyruvoyl group is generated from an internal serine residue via an autocatalytic post-translational modification. Two non-identical subunits are generated from the proenzyme in this reaction, and the pyruvate is formed at the N-terminus of the alpha chain, which is derived from the carboxyl end of the proenzyme. The post-translation cleavage follows an unusual pathway, termed non-hydrolytic serinolysis, in which the side chain hydroxyl group of the serine supplies its oxygen atom to form the C-terminus of the beta chain, while the remainder of the serine residue undergoes an oxidative deamination to produce ammonia and the pyruvoyl group blocking the N-terminus of the alpha chain.

The catalysed reaction is S-adenosyl-L-methionine + H(+) = S-adenosyl 3-(methylsulfanyl)propylamine + CO2. The protein operates within amine and polyamine biosynthesis; S-adenosylmethioninamine biosynthesis; S-adenosylmethioninamine from S-adenosyl-L-methionine: step 1/1. Functionally, catalyzes the decarboxylation of S-adenosylmethionine to S-adenosylmethioninamine (dcAdoMet), the propylamine donor required for the synthesis of the polyamines spermine and spermidine from the diamine putrescine. The protein is S-adenosylmethionine decarboxylase proenzyme (speH) of Thermotoga maritima (strain ATCC 43589 / DSM 3109 / JCM 10099 / NBRC 100826 / MSB8).